Here is a 292-residue protein sequence, read N- to C-terminus: UDP-3-O-acyl-N-acetylglucosamine deacetylase (292 aa).

Zn(2+) is bound by residues His76, His232, and Asp236. His259 serves as the catalytic Proton donor.

This sequence belongs to the LpxC family. Requires Zn(2+) as cofactor.

The catalysed reaction is a UDP-3-O-[(3R)-3-hydroxyacyl]-N-acetyl-alpha-D-glucosamine + H2O = a UDP-3-O-[(3R)-3-hydroxyacyl]-alpha-D-glucosamine + acetate. It functions in the pathway glycolipid biosynthesis; lipid IV(A) biosynthesis; lipid IV(A) from (3R)-3-hydroxytetradecanoyl-[acyl-carrier-protein] and UDP-N-acetyl-alpha-D-glucosamine: step 2/6. Its function is as follows. Catalyzes the hydrolysis of UDP-3-O-myristoyl-N-acetylglucosamine to form UDP-3-O-myristoylglucosamine and acetate, the committed step in lipid A biosynthesis. This is UDP-3-O-acyl-N-acetylglucosamine deacetylase from Thermodesulfovibrio yellowstonii (strain ATCC 51303 / DSM 11347 / YP87).